A 223-amino-acid polypeptide reads, in one-letter code: MVSFTTLLAGFVAVTGVLSAPTETVEVVDVEKRQTIGPGTGFNNGYYYSYWNDGHSGVTYTNGAGGSFSVNWANSGNFVGGKGWNPGSSSRVINFSGSYNPNGNSYLSVYGWSKNPLIEYYIVENFGTYNPSTGTTKLGEVTSDGSVYDIYRTQRVNQPSIIGTATFYQYWSVRRNHAPAARSRLRTTSNAWRNLGLTLGTLDYQIIAVEGYFSSGNANINVS.

Residues 1–19 (MVSFTTLLAGFVAVTGVLS) form the signal peptide. The GH11 domain maps to 34–223 (QTIGPGTGFN…SSGNANINVS (190 aa)). Asn94 carries an N-linked (GlcNAc...) asparagine glycan. Glu119 serves as the catalytic Nucleophile. Glu210 (proton donor) is an active-site residue.

It belongs to the glycosyl hydrolase 11 (cellulase G) family. As to quaternary structure, interactc with tomato LeEix2 receptor to trigger its internalization.

The protein resides in the secreted. It carries out the reaction Endohydrolysis of (1-&gt;4)-beta-D-xylosidic linkages in xylans.. The protein operates within glycan degradation; xylan degradation. In terms of biological role, endo-1,4-beta-xylanase involved in the hydrolysis of xylan, a major structural heterogeneous polysaccharide found in plant biomass representing the second most abundant polysaccharide in the biosphere, after cellulose. Acts as an elicitor of plant defense responses in hosts such as tobacco (Nicotiana tabacum) or tomato (Solanum lycopersicum). Induces the production of ethylene and leads alterations in membrane function with rapid efflux of potassium, uptake of calcium, alkalization of the medium, increased leakage of cellular components and necrosis in plant hosts. EIX is translocated through the xylem of the host plant to the leaf mesophyll, leading to host response to pathogen-derived extracellular proteins in tissues distant from the invading pathogen. Greatly enhances the expression of two calcineurin B-like proteins-interacting protein kinases (CIPKs) family members, OsCIPK14 and OsCIPK15, in rice cultured cells. In tomato, triggers the defense response via binding to and subsequent internalization of the LeEix2 receptor. The chain is Ethylene-inducing xylanase from Hypocrea rufa (Trichoderma viride).